A 483-amino-acid polypeptide reads, in one-letter code: Acetyl-coenzyme A carboxylase carboxyl transferase subunit beta, chloroplastic (483 aa).

Positions 221–483 (LWVQCENCYG…FQFHGFFPRP (263 aa)) constitute a CoA carboxyltransferase N-terminal domain. The Zn(2+) site is built by cysteine 225, cysteine 228, cysteine 244, and cysteine 247. The C4-type zinc finger occupies 225 to 247 (CENCYGLNYKKFFSSKMNICEQC).

The protein belongs to the AccD/PCCB family. In terms of assembly, acetyl-CoA carboxylase is a heterohexamer composed of biotin carboxyl carrier protein, biotin carboxylase and 2 subunits each of ACCase subunit alpha and ACCase plastid-coded subunit beta (accD). It depends on Zn(2+) as a cofactor.

It localises to the plastid. The protein localises to the chloroplast stroma. The catalysed reaction is N(6)-carboxybiotinyl-L-lysyl-[protein] + acetyl-CoA = N(6)-biotinyl-L-lysyl-[protein] + malonyl-CoA. It participates in lipid metabolism; malonyl-CoA biosynthesis; malonyl-CoA from acetyl-CoA: step 1/1. In terms of biological role, component of the acetyl coenzyme A carboxylase (ACC) complex. Biotin carboxylase (BC) catalyzes the carboxylation of biotin on its carrier protein (BCCP) and then the CO(2) group is transferred by the transcarboxylase to acetyl-CoA to form malonyl-CoA. In Nuphar advena (Common spatterdock), this protein is Acetyl-coenzyme A carboxylase carboxyl transferase subunit beta, chloroplastic.